Reading from the N-terminus, the 103-residue chain is MKSLLLLSVLAALAVAALCYESHESLESYEINPFLNRRNANTFISPQQRWRAKAQERIRELNKPPYELNREACDDYKLCERYAMVYGYNAAYNRYFRQRPGAK.

A signal peptide spans 1–19 (MKSLLLLSVLAALAVAALC). Glu21 carries the 4-carboxyglutamate modification. Ser22, Ser25, and Ser28 each carry phosphoserine. One can recognise a Gla domain in the interval 51–97 (RAKAQERIRELNKPPYELNREACDDYKLCERYAMVYGYNAAYNRYFR). 4-carboxyglutamate occurs at positions 56, 60, 67, and 71. Cys73 and Cys79 form a disulfide bridge.

It belongs to the osteocalcin/matrix Gla protein family. In terms of processing, requires vitamin K-dependent gamma-carboxylation for its function.

It localises to the secreted. Associates with the organic matrix of bone and cartilage. Thought to act as an inhibitor of bone formation. The sequence is that of Matrix Gla protein (MGP) from Sus scrofa (Pig).